A 235-amino-acid polypeptide reads, in one-letter code: Transcriptional regulatory protein CseB (235 aa).

Positions 6 to 119 constitute a Response regulatory domain; that stretch reads HVLFVEDDDV…VLVARIRAVL (114 aa). Residue aspartate 55 is modified to 4-aspartylphosphate. A DNA-binding region (ompR/PhoB-type) is located at residues 141–235; it reads GGVLTFGELE…VRGFGYKLKA (95 aa).

In terms of processing, phosphorylated by CseC.

Its subcellular location is the cytoplasm. Its function is as follows. Member of the two-component regulatory system CseB/CseC involved in the stability of the cell envelope. CseB activates transcription of RNA polymerase sigma-E factor, in response to changes in the cell envelope. This is Transcriptional regulatory protein CseB (cseB) from Streptomyces avermitilis (strain ATCC 31267 / DSM 46492 / JCM 5070 / NBRC 14893 / NCIMB 12804 / NRRL 8165 / MA-4680).